The sequence spans 476 residues: Bifunctional protein HldE (476 aa).

Residues 1–319 (MKVSLPAFEK…EALALHHGES (319 aa)) form a ribokinase region. An ATP-binding site is contributed by 195 to 198 (NMSE). The active site involves Asp-264. The cytidylyltransferase stretch occupies residues 345-476 (MTNGCFDILH…AIIQNIMAKQ (132 aa)).

The protein in the N-terminal section; belongs to the carbohydrate kinase PfkB family. It in the C-terminal section; belongs to the cytidylyltransferase family. In terms of assembly, homodimer.

The enzyme catalyses D-glycero-beta-D-manno-heptose 7-phosphate + ATP = D-glycero-beta-D-manno-heptose 1,7-bisphosphate + ADP + H(+). The catalysed reaction is D-glycero-beta-D-manno-heptose 1-phosphate + ATP + H(+) = ADP-D-glycero-beta-D-manno-heptose + diphosphate. It functions in the pathway nucleotide-sugar biosynthesis; ADP-L-glycero-beta-D-manno-heptose biosynthesis; ADP-L-glycero-beta-D-manno-heptose from D-glycero-beta-D-manno-heptose 7-phosphate: step 1/4. It participates in nucleotide-sugar biosynthesis; ADP-L-glycero-beta-D-manno-heptose biosynthesis; ADP-L-glycero-beta-D-manno-heptose from D-glycero-beta-D-manno-heptose 7-phosphate: step 3/4. Catalyzes the phosphorylation of D-glycero-D-manno-heptose 7-phosphate at the C-1 position to selectively form D-glycero-beta-D-manno-heptose-1,7-bisphosphate. In terms of biological role, catalyzes the ADP transfer from ATP to D-glycero-beta-D-manno-heptose 1-phosphate, yielding ADP-D-glycero-beta-D-manno-heptose. The sequence is that of Bifunctional protein HldE from Shewanella sp. (strain ANA-3).